We begin with the raw amino-acid sequence, 378 residues long: Probable tRNA sulfurtransferase (378 aa).

A THUMP domain is found at 51 to 153 (DANLEKLQYV…SDKTYLFSKT (103 aa)). Residues 171 to 172 (LM), 196 to 197 (SF), arginine 253, glycine 275, and glutamine 284 each bind ATP.

It belongs to the ThiI family.

The protein localises to the cytoplasm. The enzyme catalyses [ThiI sulfur-carrier protein]-S-sulfanyl-L-cysteine + a uridine in tRNA + 2 reduced [2Fe-2S]-[ferredoxin] + ATP + H(+) = [ThiI sulfur-carrier protein]-L-cysteine + a 4-thiouridine in tRNA + 2 oxidized [2Fe-2S]-[ferredoxin] + AMP + diphosphate. It carries out the reaction [ThiS sulfur-carrier protein]-C-terminal Gly-Gly-AMP + S-sulfanyl-L-cysteinyl-[cysteine desulfurase] + AH2 = [ThiS sulfur-carrier protein]-C-terminal-Gly-aminoethanethioate + L-cysteinyl-[cysteine desulfurase] + A + AMP + 2 H(+). It functions in the pathway cofactor biosynthesis; thiamine diphosphate biosynthesis. In terms of biological role, catalyzes the ATP-dependent transfer of a sulfur to tRNA to produce 4-thiouridine in position 8 of tRNAs, which functions as a near-UV photosensor. Also catalyzes the transfer of sulfur to the sulfur carrier protein ThiS, forming ThiS-thiocarboxylate. This is a step in the synthesis of thiazole, in the thiamine biosynthesis pathway. The sulfur is donated as persulfide by IscS. The protein is Probable tRNA sulfurtransferase of Mycoplasmopsis agalactiae (strain NCTC 10123 / CIP 59.7 / PG2) (Mycoplasma agalactiae).